The chain runs to 492 residues: Phytoene desaturase (lycopene-forming) (492 aa).

5-38 is an FAD binding site; that stretch reads TVIGAGFGGLALAIRLQAAGIPVLLLEQRDKPGG.

Belongs to the carotenoid/retinoid oxidoreductase family. It depends on FAD as a cofactor.

Its subcellular location is the cell membrane. It carries out the reaction 15-cis-phytoene + 4 A = all-trans-lycopene + 4 AH2. The protein operates within carotenoid biosynthesis; lycopene biosynthesis. Its activity is regulated as follows. Inhibited by NAD and NADP. In terms of biological role, converts 15-cis-phytoene into all-trans-lycopene via the intermediary of all-trans-phytofluene, all-trans-zeta-carotene and all-trans-neurosporene, by the introduction of four double bonds. The polypeptide is Phytoene desaturase (lycopene-forming) (crtI) (Pantoea ananas (Erwinia uredovora)).